Here is a 324-residue protein sequence, read N- to C-terminus: Homeobox protein engrailed-2 (324 aa).

3 disordered regions span residues 1 to 59, 89 to 174, and 215 to 240; these read MEEK…HQHP, GGAR…VLKA, and DRPS…RPRT. Over residues 89-110 the composition is skewed to gly residues; that stretch reads GGARGGEGGAGTTEGGGGGAGG. The homeobox DNA-binding region spans 235–294; that stretch reads DKRPRTAFTAEQLQRLKAEFQTNRYLTEQRRQSLAQELSLNESQIKIWFQNKRAKIKKAT.

Belongs to the engrailed homeobox family. Cerebellar granule cells.

The protein localises to the nucleus. The chain is Homeobox protein engrailed-2 (En2) from Mus musculus (Mouse).